The following is a 65-amino-acid chain: Large ribosomal subunit protein bL35 (65 aa).

Positions 1 to 15 (MPKMKTKKSASKRFT) are enriched in basic residues. The tract at residues 1–27 (MPKMKTKKSASKRFTARPNGSFKRGQA) is disordered.

This sequence belongs to the bacterial ribosomal protein bL35 family.

The chain is Large ribosomal subunit protein bL35 from Cupriavidus pinatubonensis (strain JMP 134 / LMG 1197) (Cupriavidus necator (strain JMP 134)).